Consider the following 116-residue polypeptide: uncharacterized protein (116 aa).

A helical transmembrane segment spans residues Leu5 to Phe23.

It localises to the membrane. This is an uncharacterized protein from Saccharomyces cerevisiae (strain ATCC 204508 / S288c) (Baker's yeast).